A 425-amino-acid chain; its full sequence is Protein CLP1 homolog (425 aa).

ATP-binding positions include Glu-18, Lys-59, and Asp-121–Thr-126.

This sequence belongs to the Clp1 family. Clp1 subfamily.

Its subcellular location is the nucleus. Functionally, required for endonucleolytic cleavage during polyadenylation-dependent pre-mRNA 3'-end formation. The sequence is that of Protein CLP1 homolog (cbc) from Drosophila grimshawi (Hawaiian fruit fly).